A 588-amino-acid chain; its full sequence is 2-isopropylmalate synthase (588 aa).

One can recognise a Pyruvate carboxyltransferase domain in the interval 40-314 (PRWCAVDLRD…DPQIDFSDLD (275 aa)). Mg(2+)-binding residues include Asp-49, His-253, His-255, and Asn-289. The interval 456 to 588 (APLDRVEEKW…TVREPELAAV (133 aa)) is regulatory domain.

Belongs to the alpha-IPM synthase/homocitrate synthase family. LeuA type 2 subfamily. In terms of assembly, homodimer. It depends on Mg(2+) as a cofactor.

Its subcellular location is the cytoplasm. The enzyme catalyses 3-methyl-2-oxobutanoate + acetyl-CoA + H2O = (2S)-2-isopropylmalate + CoA + H(+). It functions in the pathway amino-acid biosynthesis; L-leucine biosynthesis; L-leucine from 3-methyl-2-oxobutanoate: step 1/4. Functionally, catalyzes the condensation of the acetyl group of acetyl-CoA with 3-methyl-2-oxobutanoate (2-ketoisovalerate) to form 3-carboxy-3-hydroxy-4-methylpentanoate (2-isopropylmalate). The protein is 2-isopropylmalate synthase of Clavibacter michiganensis subsp. michiganensis (strain NCPPB 382).